The sequence spans 430 residues: Enolase (430 aa).

Q162 contributes to the (2R)-2-phosphoglycerate binding site. Residue E204 is the Proton donor of the active site. 3 residues coordinate Mg(2+): D242, E289, and D316. (2R)-2-phosphoglycerate contacts are provided by K341, R370, S371, and K392. Residue K341 is the Proton acceptor of the active site.

The protein belongs to the enolase family. The cofactor is Mg(2+).

The protein localises to the cytoplasm. It localises to the secreted. The protein resides in the cell surface. It catalyses the reaction (2R)-2-phosphoglycerate = phosphoenolpyruvate + H2O. It functions in the pathway carbohydrate degradation; glycolysis; pyruvate from D-glyceraldehyde 3-phosphate: step 4/5. Catalyzes the reversible conversion of 2-phosphoglycerate (2-PG) into phosphoenolpyruvate (PEP). It is essential for the degradation of carbohydrates via glycolysis. The protein is Enolase of Flavobacterium johnsoniae (strain ATCC 17061 / DSM 2064 / JCM 8514 / BCRC 14874 / CCUG 350202 / NBRC 14942 / NCIMB 11054 / UW101) (Cytophaga johnsonae).